The sequence spans 149 residues: Decarboxylase AgnL1 (149 aa).

In terms of domain architecture, EthD spans 30–125 (PGMSEEDYRH…VGDHEKFADT (96 aa)).

This sequence belongs to the tpcK family.

The catalysed reaction is atrochrysone carboxylate + H(+) = atrochrysone + CO2. It participates in secondary metabolite biosynthesis. Its function is as follows. Decarboxylase; part of the gene cluster that mediates the biosynthesis of agnestins, dihydroxy-xanthone metabolites. The pathway begins with the assembly and cyclization of atrochrysone thioester by the non-reducing polyketide synthase Agnpks1. The atrochrysone carboxyl ACP thioesterase AgnL7 then breaks the thioester bond and releases the atrochrysone carboxylic acid as the first enzyme-free intermediate. The decarboxylase AgnL1 then catalyzes the concerted decarboxylation-elimination required to convert atochrysone carboxylic acid into emodin anthrone, which is further oxidized to emodin by the anthrone oxygenase AgnL2. Emodin then undergoes reduction catalyzed by the oxidoreductase AgnL4 to yield the dihydroquinone tautomer which is the substrate for reduction by the short chain dehydrogenase AgnL6 reduction to produce hydroxyketone, followed by AgnL8 dehydration and likely spontaneous autoxidation to chrysophanol. Baeyer-Villiger oxidation by the oxidase AgnL3 leads to monodictyphenone via cleavage of the C-10/C-10a bond of chrysophanol. Alternative cleavage at the C-4a/C-10 bond of chrysophanol also leads to the formation some cephalone F. Further conversion to agnestins A and B, requires reduction to dihydro-monodictyphenone, oxidation to agnestin C probably via an epoxide, and rearrangement to either agnestin A or agnestin B directly, although agnestin A or agnestin B can also interconvert. Within the cluster, AgnR1 is the only unassigned oxidoreductase present which could be involved in this conversion. However, AgnR1 seems not to be involved in this step, and thus genes involved in the proposed oxidation/reduction may be located elsewhere on the genome. Further agnestin A derivatives are probably formed by spontaneous decarboxylations, dehydrations and methanolysis reactions. The polypeptide is Decarboxylase AgnL1 (Paecilomyces divaricatus (Penicillium divaricatum)).